A 321-amino-acid chain; its full sequence is Sideroflexin-1-3 (321 aa).

Transmembrane regions (helical) follow at residues 101-121, 146-168, 174-194, 220-240, and 266-286; these read IITG…FWQW, LVTS…NHAV, LLGR…NIPC, AAVV…IPGM, and IQTL…CAFF.

Belongs to the sideroflexin family.

It is found in the mitochondrion membrane. In terms of biological role, mitochondrial amino-acid transporter that mediates transport of serine into mitochondria. The chain is Sideroflexin-1-3 from Drosophila melanogaster (Fruit fly).